A 213-amino-acid polypeptide reads, in one-letter code: Phycocyanobilin lyase subunit beta (213 aa).

It belongs to the CpcE/RpcE/PecE family. In terms of assembly, cpcE and CpcF associate to form a lyase.

In terms of biological role, required for the chromophorylation of the CpcA gene product. The chain is Phycocyanobilin lyase subunit beta (cpcF) from Thermosynechococcus vestitus (strain NIES-2133 / IAM M-273 / BP-1).